The sequence spans 724 residues: Catalase-peroxidase (724 aa).

The segment at residues 98–226 is a cross-link (tryptophyl-tyrosyl-methioninium (Trp-Tyr) (with M-252)); the sequence is WHSAGSYRIA…LAAVMMGLIY (129 aa). The active-site Proton acceptor is the histidine 99. Residues 226–252 constitute a cross-link (tryptophyl-tyrosyl-methioninium (Tyr-Met) (with W-98)); it reads YVNPEGVDGHPDPQKTANDVRVTFARM. Histidine 267 contributes to the heme b binding site.

Belongs to the peroxidase family. Peroxidase/catalase subfamily. Homodimer or homotetramer. Requires heme b as cofactor. Post-translationally, formation of the three residue Trp-Tyr-Met cross-link is important for the catalase, but not the peroxidase activity of the enzyme.

The enzyme catalyses H2O2 + AH2 = A + 2 H2O. The catalysed reaction is 2 H2O2 = O2 + 2 H2O. Functionally, bifunctional enzyme with both catalase and broad-spectrum peroxidase activity. This chain is Catalase-peroxidase, found in Edwardsiella tarda.